The chain runs to 543 residues: Cytochrome P450 2U1 (543 aa).

4 helical membrane-spanning segments follow: residues 32 to 52, 58 to 78, 261 to 281, and 342 to 362; these read PTGG…SWLW, GIPP…VLLP, VCLN…YLPF, and LFYI…NSLL. Cys-490 contacts heme. Residues 495–515 traverse the membrane as a helical segment; it reads LAKMELFLMFVSLMQSFTFVL.

Belongs to the cytochrome P450 family. The cofactor is heme.

It is found in the endoplasmic reticulum membrane. It localises to the microsome membrane. The protein resides in the mitochondrion inner membrane. The catalysed reaction is an omega-methyl-long-chain fatty acid + reduced [NADPH--hemoprotein reductase] + O2 = an omega-hydroxy-long-chain fatty acid + oxidized [NADPH--hemoprotein reductase] + H2O + H(+). It catalyses the reaction (5Z,8Z,11Z,14Z)-eicosatetraenoate + reduced [NADPH--hemoprotein reductase] + O2 = 19-hydroxy-(5Z,8Z,11Z,14Z)-eicosatetraenoate + oxidized [NADPH--hemoprotein reductase] + H2O + H(+). The enzyme catalyses (5Z,8Z,11Z,14Z)-eicosatetraenoate + reduced [NADPH--hemoprotein reductase] + O2 = 20-hydroxy-(5Z,8Z,11Z,14Z)-eicosatetraenoate + oxidized [NADPH--hemoprotein reductase] + H2O + H(+). It carries out the reaction N-[(5Z,8Z,11Z,14Z)-eicosatetraenoyl]-serotonin + reduced [NADPH--hemoprotein reductase] + O2 = 2-oxo-N-[(5Z,8Z,11Z,14Z)-eicosatetraenoyl]-serotonin + oxidized [NADPH--hemoprotein reductase] + H2O + H(+). Functionally, a cytochrome P450 monooxygenase involved in the metabolism of arachidonic acid and its conjugates. Mechanistically, uses molecular oxygen inserting one oxygen atom into a substrate, and reducing the second into a water molecule, with two electrons provided by NADPH via cytochrome P450 reductase (CPR; NADPH-ferrihemoprotein reductase). Acts as an omega and omega-1 hydroxylase for arachidonic acid and possibly for other long chain fatty acids. May modulate the arachidonic acid signaling pathway and play a role in other fatty acid signaling processes. May down-regulate the biological activities of N-arachidonoyl-serotonin, an endocannabinoid that has anti-nociceptive effects through inhibition of fatty acid amide hydrolase FAAH, TRPV1 receptor and T-type calcium channels. Catalyzes C-2 oxidation of the indole ring of N-arachidonoyl-serotonin forming a less active product 2-oxo-N-arachidonoyl-serotonin. This Bos taurus (Bovine) protein is Cytochrome P450 2U1 (CYP2U1).